We begin with the raw amino-acid sequence, 328 residues long: Ribosomal RNA small subunit methyltransferase H (328 aa).

S-adenosyl-L-methionine contacts are provided by residues 37–39 (GGH), Asp57, Phe83, Asp104, and Gln111.

The protein belongs to the methyltransferase superfamily. RsmH family.

Its subcellular location is the cytoplasm. The catalysed reaction is cytidine(1402) in 16S rRNA + S-adenosyl-L-methionine = N(4)-methylcytidine(1402) in 16S rRNA + S-adenosyl-L-homocysteine + H(+). Functionally, specifically methylates the N4 position of cytidine in position 1402 (C1402) of 16S rRNA. The protein is Ribosomal RNA small subunit methyltransferase H of Neisseria meningitidis serogroup C / serotype 2a (strain ATCC 700532 / DSM 15464 / FAM18).